The chain runs to 623 residues: MTSGRSTRVTMFESQASMGEPSNEDLSSTDDVRTDAPLAYAKYVTFDQSLPLERGGELPEIRCCYETWGTLNDDGSNAVLVCHAVSGDSHAARHDEDDQPGWWDGLIGPGLPIDTDRLFVVCPNVLGGCRGSTGPGDADPTSPDGKPYGANFPRITIGDIVEAQKLLADHLGIRQWRAVVGGSLGGHQVLQWINRYPDAAKTCVAIATSPRLNSQALGFDVIARNAIQTDPHYAGGQYYDKDQRPDTGLAIARMLGHITYLSVEAMEAKFDPDRHDPRQIASQFEQRFSIGSYLAHQGQKFTTRFDANSYVTLSMAMDLFDLGGTRLKLMETFDEATCDFLLISFSSDWLFPPAQSREIVNALTALDKRVTYAEITTNAGHDAFLIAKDIATYGPLIRERLRDTETHPAVPSDITLNVDEESILEIIPAGSSVLDLGCGNGQLLAAIRDRHRTPGPPTTEHRLMGVEVAQENLLATAMRGIDVIDYDLNHGLPAFIDDQFDYVILNATLQAVENVVELLNEMLRVGRHAIISFPNFAYRQLRDHYVTHGRSPKAPGEFDFDWHNTPNRRFPTIADVRDLLGQLNVVIDEEVFWDVDQGQRIEPDNDPNLNADTAVIAFHRENR.

Polar residues predominate over residues 1–17 (MTSGRSTRVTMFESQAS). Residues 1 to 30 (MTSGRSTRVTMFESQASMGEPSNEDLSSTD) are disordered. The AB hydrolase-1 domain maps to 77–385 (NAVLVCHAVS…TTNAGHDAFL (309 aa)). The Nucleophile role is filled by Ser183. Arg253 provides a ligand contact to substrate. Catalysis depends on residues Asp348 and His381. Residue Asp382 coordinates substrate. The segment at 417 to 619 (NVDEESILEI…NADTAVIAFH (203 aa)) is metW.

It in the N-terminal section; belongs to the AB hydrolase superfamily. MetX family. In the C-terminal section; belongs to the MetW family. As to quaternary structure, homodimer.

It is found in the cytoplasm. It catalyses the reaction L-homoserine + acetyl-CoA = O-acetyl-L-homoserine + CoA. The protein operates within amino-acid biosynthesis; L-methionine biosynthesis via de novo pathway; O-acetyl-L-homoserine from L-homoserine: step 1/1. Transfers an acetyl group from acetyl-CoA to L-homoserine, forming acetyl-L-homoserine. This is Bifunctional methionine biosynthesis protein MetXA/MetW from Rhodopirellula baltica (strain DSM 10527 / NCIMB 13988 / SH1).